The primary structure comprises 542 residues: Nif-specific regulatory protein (542 aa).

Positions 29–170 constitute a GAF domain; sequence DLSKTLREVL…MVANLIGQTV (142 aa). One can recognise a Sigma-54 factor interaction domain in the interval 203–432; the sequence is VIGISKAMQE…LENCVERTAT (230 aa). ATP contacts are provided by residues 231 to 238 and 294 to 303; these read GESGTGKE and AHGGTLFLDE. Residues 433 to 499 are inter-domain linker; sequence MMRGDLITEV…ATGAAPPTSE (67 aa). Positions 446 and 451 each coordinate a divalent metal cation. Residues 500-542 form a C-terminal DNA-binding domain region; it reads RERLIWAMEQCGWVQAKAARALNISPRQMGYALQKFNIEVKKF. The H-T-H motif DNA-binding region spans 514-533; sequence QAKAARALNISPRQMGYALQ.

In terms of assembly, interacts with sigma-54.

Functionally, required for activation of most nif operons, which are directly involved in nitrogen fixation. The polypeptide is Nif-specific regulatory protein (nifA) (Herbaspirillum seropedicae).